Here is a 127-residue protein sequence, read N- to C-terminus: Histone H2B.2 (127 aa).

A disordered region spans residues 1–35 (MAPKAEKKPASKAPAAKKTTASTDASKKRTKTRKE). Residues K7 and K8 each carry the N6-acetyllysine; alternate modification. Glycyl lysine isopeptide (Lys-Gly) (interchain with G-Cter in SUMO); alternate cross-links involve residues K7 and K8. The residue at position 11 (S11) is a Phosphoserine. Low complexity predominate over residues 11–24 (SKAPAAKKTTASTD). The residue at position 12 (K12) is an N6-acetyllysine. Residue K120 forms a Glycyl lysine isopeptide (Lys-Gly) (interchain with G-Cter in ubiquitin) linkage.

This sequence belongs to the histone H2B family. In terms of assembly, the nucleosome is a histone octamer containing two molecules each of H2A, H2B, H3 and H4 assembled in one H3-H4 heterotetramer and two H2A-H2B heterodimers. The octamer wraps approximately 147 bp of DNA. Post-translationally, monoubiquitinated by the UBC2-BRE1 complex to form H2BK123ub1. H2BK123ub1 gives a specific tag for epigenetic transcriptional activation and is also prerequisite for H3K4me and H3K79me formation. H2BK123ub1 also modulates the formation of double-strand breaks during meiosis and is a prerequisite for DNA-damage checkpoint activation. Phosphorylated by STE20 to form H2BS10ph during progression through meiotic prophase. May be correlated with chromosome condensation. In terms of processing, acetylation of N-terminal lysines and particularly formation of H2BK11ac has a positive effect on transcription. Post-translationally, sumoylation to form H2BK6su or H2BK7su occurs preferentially near the telomeres and represses gene transcription.

It is found in the nucleus. It localises to the chromosome. Core component of nucleosome. Nucleosomes wrap and compact DNA into chromatin, limiting DNA accessibility to the cellular machineries which require DNA as a template. Histones thereby play a central role in transcription regulation, DNA repair, DNA replication and chromosomal stability. DNA accessibility is regulated via a complex set of post-translational modifications of histones, also called histone code, and nucleosome remodeling. The chain is Histone H2B.2 (HTB2) from Eremothecium gossypii (strain ATCC 10895 / CBS 109.51 / FGSC 9923 / NRRL Y-1056) (Yeast).